Reading from the N-terminus, the 722-residue chain is Polyribonucleotide nucleotidyltransferase (722 aa).

Mg(2+) contacts are provided by D487 and D493. The 60-residue stretch at 554-613 folds into the KH domain; sequence PRMVSFKIHPDKIREVIGKGGATIQALTKETGCSIDIKDDGTVTIASTSAEGMAEAKARI. The S1 motif domain maps to 623–691; that stretch reads GKIYEGPVVK…ERGRLRLSLK (69 aa).

The protein belongs to the polyribonucleotide nucleotidyltransferase family. It depends on Mg(2+) as a cofactor.

The protein resides in the cytoplasm. The enzyme catalyses RNA(n+1) + phosphate = RNA(n) + a ribonucleoside 5'-diphosphate. Its function is as follows. Involved in mRNA degradation. Catalyzes the phosphorolysis of single-stranded polyribonucleotides processively in the 3'- to 5'-direction. The sequence is that of Polyribonucleotide nucleotidyltransferase from Polynucleobacter asymbioticus (strain DSM 18221 / CIP 109841 / QLW-P1DMWA-1) (Polynucleobacter necessarius subsp. asymbioticus).